The following is a 120-amino-acid chain: MFVLSGYDAFLGFLLIATAVPVLALLTNKILAPKSRNGERELTYESGMEPVGGAWIQFNIRYYMFALVFVIFDVETVFLYPWAVAFHRLGLLAFIEALIFIAILVIALAYAWRKGALEWS.

The next 3 membrane-spanning stretches (helical) occupy residues 6-26, 64-84, and 89-109; these read GYDA…LALL, MFAL…PWAV, and LGLL…IALA.

It belongs to the complex I subunit 3 family. In terms of assembly, NDH is composed of at least 16 different subunits, 5 of which are encoded in the nucleus.

The protein localises to the plastid. It is found in the organellar chromatophore thylakoid membrane. It catalyses the reaction a plastoquinone + NADH + (n+1) H(+)(in) = a plastoquinol + NAD(+) + n H(+)(out). The enzyme catalyses a plastoquinone + NADPH + (n+1) H(+)(in) = a plastoquinol + NADP(+) + n H(+)(out). NDH shuttles electrons from NAD(P)H:plastoquinone, via FMN and iron-sulfur (Fe-S) centers, to quinones in the photosynthetic chain and possibly in a chloroplast respiratory chain. The immediate electron acceptor for the enzyme in this species is believed to be plastoquinone. Couples the redox reaction to proton translocation, and thus conserves the redox energy in a proton gradient. This chain is NAD(P)H-quinone oxidoreductase subunit 3, organellar chromatophore, found in Paulinella chromatophora.